The sequence spans 645 residues: E3 ubiquitin-protein ligase ORTHRUS 2 (645 aa).

Residues 12–63 form a PHD-type zinc finger; that stretch reads DGVCMRCKSNPPPEESLTCGTCVTPWHVSCLSSPPKTLASTLQWHCPDCSGE. Positions 96-133 are disordered; that stretch reads LSTEEKAKMRQRLLSGKGVEEDDEEEKRKKKGKGKNPN. Residues 146-185 form an RING-type 1 zinc finger; that stretch reads CSFCMQLPERPVTKPCGHNACLKCFEKWMGQGKRTCGKCR. The 150-residue stretch at 273-422 folds into the YDG domain; the sequence is VRNQGLLVGE…FKVCRYLFVR (150 aa). An RING-type 2 zinc finger spans residues 518-575; the sequence is CQICQQVLTLPVTTPCAHNFCKACLEAKFAGKTLVRERSTGGRTLRSRKNVLNCPCCP. A coiled-coil region spans residues 583–613; that stretch reads QNPQVNREVAEVIEKLKTQEEDTAELEDEDE. Positions 599 to 645 are disordered; it reads KTQEEDTAELEDEDEGECSGTTPEEDSEQPKKRIKLDTDATVSATIR. Residues 603–625 are compositionally biased toward acidic residues; sequence EDTAELEDEDEGECSGTTPEEDS. Basic and acidic residues predominate over residues 626–636; that stretch reads EQPKKRIKLDT.

Interacts with histones CENH3, HTB2, HTR3 and H4. In terms of tissue distribution, mostly expressed in inflorescence and, to a lower extent, in leaves.

The protein resides in the nucleus. It carries out the reaction S-ubiquitinyl-[E2 ubiquitin-conjugating enzyme]-L-cysteine + [acceptor protein]-L-lysine = [E2 ubiquitin-conjugating enzyme]-L-cysteine + N(6)-ubiquitinyl-[acceptor protein]-L-lysine.. It participates in protein modification; protein ubiquitination. In terms of biological role, E3 ubiquitin-protein ligase. Participates in CpG methylation-dependent transcriptional regulation and epigenetic transcriptional silencing. Mediates ubiquitination with the E2 ubiquitin-conjugating enzyme UBC11. Promotes methylation-mediated gene silencing leading, for example, to early flowering. Associates with methylated DNA, and can bind to CpG, CpNpG, and CpNpN DNA motifs, with a strong preference for methylated forms, and with highest affinity for CpG substrate. Probably acts at the DNA methylation?histone interface to maintain centromeric heterochromatin. The sequence is that of E3 ubiquitin-protein ligase ORTHRUS 2 (ORTH2) from Arabidopsis thaliana (Mouse-ear cress).